The chain runs to 918 residues: Isoleucine--tRNA ligase 1 (918 aa).

The 'HIGH' region signature appears at 57–67 (PYANGDIHIGH). Residue Glu-553 participates in L-isoleucyl-5'-AMP binding. The short motif at 594–598 (KMSKS) is the 'KMSKS' region element. Lys-597 is an ATP binding site. 4 residues coordinate Zn(2+): Cys-885, Cys-888, Cys-905, and Cys-908.

This sequence belongs to the class-I aminoacyl-tRNA synthetase family. IleS type 1 subfamily. As to quaternary structure, monomer. The cofactor is Zn(2+).

Its subcellular location is the cytoplasm. It carries out the reaction tRNA(Ile) + L-isoleucine + ATP = L-isoleucyl-tRNA(Ile) + AMP + diphosphate. Functionally, catalyzes the attachment of isoleucine to tRNA(Ile). As IleRS can inadvertently accommodate and process structurally similar amino acids such as valine, to avoid such errors it has two additional distinct tRNA(Ile)-dependent editing activities. One activity is designated as 'pretransfer' editing and involves the hydrolysis of activated Val-AMP. The other activity is designated 'posttransfer' editing and involves deacylation of mischarged Val-tRNA(Ile). This is Isoleucine--tRNA ligase 1 from Oceanobacillus iheyensis (strain DSM 14371 / CIP 107618 / JCM 11309 / KCTC 3954 / HTE831).